Reading from the N-terminus, the 132-residue chain is Fatty acid-binding protein 9 (132 aa).

Residues S13, S14, S40, S42, S44, and S91 each carry the phosphoserine modification.

It belongs to the calycin superfamily. Fatty-acid binding protein (FABP) family. As to expression, testis.

The protein resides in the cytoplasm. The protein is Fatty acid-binding protein 9 (Fabp9) of Mus musculus (Mouse).